The following is a 372-amino-acid chain: Glutamate 5-kinase (372 aa).

Lys14 contributes to the ATP binding site. Ser54, Asp141, and Asn153 together coordinate substrate. 173-174 (TD) contacts ATP. In terms of domain architecture, PUA spans 280–358 (RGTLVLDDGA…DAIEALLGYV (79 aa)).

This sequence belongs to the glutamate 5-kinase family.

Its subcellular location is the cytoplasm. The catalysed reaction is L-glutamate + ATP = L-glutamyl 5-phosphate + ADP. The protein operates within amino-acid biosynthesis; L-proline biosynthesis; L-glutamate 5-semialdehyde from L-glutamate: step 1/2. Catalyzes the transfer of a phosphate group to glutamate to form L-glutamate 5-phosphate. The chain is Glutamate 5-kinase from Pseudomonas paraeruginosa (strain DSM 24068 / PA7) (Pseudomonas aeruginosa (strain PA7)).